We begin with the raw amino-acid sequence, 193 residues long: Potassium-transporting ATPase KdpC subunit (193 aa).

Residues 14-34 form a helical membrane-spanning segment; sequence ITFTFLVLCGLVYPLIVTGIA.

It belongs to the KdpC family. As to quaternary structure, the system is composed of three essential subunits: KdpA, KdpB and KdpC.

It is found in the cell membrane. Part of the high-affinity ATP-driven potassium transport (or Kdp) system, which catalyzes the hydrolysis of ATP coupled with the electrogenic transport of potassium into the cytoplasm. This subunit acts as a catalytic chaperone that increases the ATP-binding affinity of the ATP-hydrolyzing subunit KdpB by the formation of a transient KdpB/KdpC/ATP ternary complex. This Bacillus cereus (strain ATCC 10987 / NRS 248) protein is Potassium-transporting ATPase KdpC subunit.